We begin with the raw amino-acid sequence, 585 residues long: 1-deoxy-D-xylulose-5-phosphate synthase (585 aa).

Thiamine diphosphate-binding positions include H80 and 121–123; that span reads GHS. Residue D152 coordinates Mg(2+). Residues 153–154, N181, Y259, and E334 contribute to the thiamine diphosphate site; that span reads GS. N181 lines the Mg(2+) pocket.

This sequence belongs to the transketolase family. DXPS subfamily. As to quaternary structure, homodimer. Requires Mg(2+) as cofactor. It depends on thiamine diphosphate as a cofactor.

The enzyme catalyses D-glyceraldehyde 3-phosphate + pyruvate + H(+) = 1-deoxy-D-xylulose 5-phosphate + CO2. It functions in the pathway metabolic intermediate biosynthesis; 1-deoxy-D-xylulose 5-phosphate biosynthesis; 1-deoxy-D-xylulose 5-phosphate from D-glyceraldehyde 3-phosphate and pyruvate: step 1/1. Its function is as follows. Catalyzes the acyloin condensation reaction between C atoms 2 and 3 of pyruvate and glyceraldehyde 3-phosphate to yield 1-deoxy-D-xylulose-5-phosphate (DXP). This Buchnera aphidicola subsp. Schizaphis graminum (strain Sg) protein is 1-deoxy-D-xylulose-5-phosphate synthase.